The sequence spans 360 residues: Casein kinase II subunit alpha (360 aa).

A Protein kinase domain is found at 38-323; sequence YQLVRKLGRG…AQEAMGHEYF (286 aa). Residues 44–52 and Lys67 contribute to the ATP site; that span reads LGRGKYSEV. The Proton acceptor role is filled by Asp155. Residues 334 to 360 are disordered; it reads NGTEQADGQGASNSASSQSSDAKIDGA. Residues 338 to 354 are compositionally biased toward low complexity; the sequence is QADGQGASNSASSQSSD.

It belongs to the protein kinase superfamily. Ser/Thr protein kinase family. CK2 subfamily. As to quaternary structure, tetramer of two alpha and two beta chains. In terms of tissue distribution, expressed in a subset of the adult male sensory neurons: CEM head neurons, ray RnB neurons, and hook HOB tail neurons.

The protein localises to the cell projection. The protein resides in the axon. It localises to the cilium. Its subcellular location is the dendrite. It is found in the perikaryon. It catalyses the reaction L-seryl-[protein] + ATP = O-phospho-L-seryl-[protein] + ADP + H(+). It carries out the reaction L-threonyl-[protein] + ATP = O-phospho-L-threonyl-[protein] + ADP + H(+). Its function is as follows. Casein kinases are operationally defined by their preferential utilization of acidic proteins such as caseins as substrates. The alpha chain contains the catalytic site. May participate in Wnt signaling. Modulates two aspects of male mating behavior; response to hermaphrodite contact and vulval location, acting in the same pathway as lov-1 and pkd-2. The sequence is that of Casein kinase II subunit alpha (kin-3) from Caenorhabditis elegans.